Reading from the N-terminus, the 382-residue chain is S-adenosylmethionine synthase (382 aa).

Residue histidine 16 coordinates ATP. Aspartate 18 serves as a coordination point for Mg(2+). Glutamate 44 provides a ligand contact to K(+). Residues glutamate 57 and glutamine 100 each coordinate L-methionine. Residues glutamine 100–glutamate 110 are flexible loop. Residues aspartate 165–lysine 167, aspartate 240, arginine 246–lysine 247, alanine 263, and lysine 267 contribute to the ATP site. Aspartate 240 serves as a coordination point for L-methionine. Lysine 271 is an L-methionine binding site.

The protein belongs to the AdoMet synthase family. Homotetramer; dimer of dimers. The cofactor is Mg(2+). K(+) serves as cofactor.

Its subcellular location is the cytoplasm. It catalyses the reaction L-methionine + ATP + H2O = S-adenosyl-L-methionine + phosphate + diphosphate. It functions in the pathway amino-acid biosynthesis; S-adenosyl-L-methionine biosynthesis; S-adenosyl-L-methionine from L-methionine: step 1/1. Functionally, catalyzes the formation of S-adenosylmethionine (AdoMet) from methionine and ATP. The overall synthetic reaction is composed of two sequential steps, AdoMet formation and the subsequent tripolyphosphate hydrolysis which occurs prior to release of AdoMet from the enzyme. The polypeptide is S-adenosylmethionine synthase (Saccharophagus degradans (strain 2-40 / ATCC 43961 / DSM 17024)).